We begin with the raw amino-acid sequence, 68 residues long: Putative protein YfaH (68 aa).

The polypeptide is Putative protein YfaH (yfaH) (Escherichia coli (strain K12)).